Here is a 108-residue protein sequence, read N- to C-terminus: Nucleoid-associated protein Bphy_0952 (108 aa).

The tract at residues 87 to 108 (AQEKMGGMTSGLPLPPGFKLPF) is disordered. A compositionally biased stretch (pro residues) spans 99-108 (PLPPGFKLPF).

Belongs to the YbaB/EbfC family. As to quaternary structure, homodimer.

The protein localises to the cytoplasm. It localises to the nucleoid. Binds to DNA and alters its conformation. May be involved in regulation of gene expression, nucleoid organization and DNA protection. The polypeptide is Nucleoid-associated protein Bphy_0952 (Paraburkholderia phymatum (strain DSM 17167 / CIP 108236 / LMG 21445 / STM815) (Burkholderia phymatum)).